A 543-amino-acid chain; its full sequence is Acrosin-binding protein (543 aa).

The signal sequence occupies residues 1 to 25; it reads MRKPAAGFLPSLLKVLLLPLAPAAA. A pro-ACR binding region spans residues 26 to 106; it reads QDSTQASTPG…ASWFESFCQF (81 aa). A propeptide spans 26–273 (removed in mature form); the sequence is QDSTQASTPG…NPSSFAPRVR (248 aa). Residues 185–272 are disordered; sequence SLGGQEQAPE…SNPSSFAPRV (88 aa). Basic and acidic residues predominate over residues 192–220; sequence APEHKQEQGVEHRQEPTQEHKQEEGQKQE. The span at 221–231 shows a compositional bias: acidic residues; that stretch reads EQEEEQEEEGK. Over residues 232–243 the composition is skewed to basic and acidic residues; the sequence is QEEGQGTKEGRE. The tract at residues 319–427 is pro-ACR binding; sequence LPHTEALLVL…NQVGSPESGR (109 aa).

In terms of assembly, binds proacrosin (pro-ACR). Does not bind the mature form of ACR. In terms of processing, phosphorylated on Tyr residues in capacitated sperm. The N-terminus is blocked. Post-translationally, synthesized as a 60-kDa precursor, the 32-kDa mature form is post-translationally produced by the removal of the N-terminal half of the precursor during sperm maturation in the testis and/or epididymis. In terms of tissue distribution, expression restricted to testis in normal tissue. Expressed in a wide spectrum of cancers, including bladder, breast, liver, lung and colon cancers.

The protein resides in the secreted. It localises to the cytoplasmic vesicle. It is found in the secretory vesicle. The protein localises to the acrosome. Functionally, acrosomal protein that maintains proacrosin (pro-ACR) as an enzymatically inactive zymogen in the acrosome. Involved also in the acrosome formation. The protein is Acrosin-binding protein of Homo sapiens (Human).